Consider the following 755-residue polypeptide: Anaphase-promoting complex subunit 5 (755 aa).

S195 is modified (phosphoserine). TPR repeat units follow at residues 209 to 249 (QKQA…FNPD), 250 to 300 (FAEA…GRSL), 301 to 337 (RYAA…SNDH), 338 to 378 (VCLQ…YLAS), 379 to 418 (LGIQ…SELI), 419 to 466 (DISI…TESF), 467 to 500 (AVAL…FPPN), 501 to 540 (SQHA…ALNS), 541 to 580 (IEGV…TEMV), 581 to 620 (ISVL…QYLA), 621 to 660 (SETV…ILDK), 661 to 696 (GRAM…NLNE), and 697 to 736 (AKNY…CAML). Phosphothreonine is present on T232.

It belongs to the APC5 family. In terms of assembly, the mammalian APC/C is composed at least of 14 distinct subunits ANAPC1, ANAPC2, CDC27/APC3, ANAPC4, ANAPC5, CDC16/APC6, ANAPC7, CDC23/APC8, ANAPC10, ANAPC11, CDC26/APC12, ANAPC13, ANAPC15 and ANAPC16 that assemble into a complex of at least 19 chains with a combined molecular mass of around 1.2 MDa; APC/C interacts with FZR1 and FBXO5.

It is found in the nucleus. Its subcellular location is the cytoplasm. It localises to the cytoskeleton. The protein localises to the spindle. The protein operates within protein modification; protein ubiquitination. Component of the anaphase promoting complex/cyclosome (APC/C), a cell cycle-regulated E3 ubiquitin ligase that controls progression through mitosis and the G1 phase of the cell cycle. The APC/C complex acts by mediating ubiquitination and subsequent degradation of target proteins: it mainly mediates the formation of 'Lys-11'-linked polyubiquitin chains and, to a lower extent, the formation of 'Lys-48'- and 'Lys-63'-linked polyubiquitin chains. The APC/C complex catalyzes assembly of branched 'Lys-11'-/'Lys-48'-linked branched ubiquitin chains on target proteins. This Homo sapiens (Human) protein is Anaphase-promoting complex subunit 5 (ANAPC5).